The sequence spans 78 residues: CDC42 small effector protein 1 (78 aa).

S-palmitoyl cysteine attachment occurs at residues Cys10 and Cys11. A CRIB domain is found at 30-43 (IGEPMNFVHLTHIG).

The protein belongs to the CDC42SE/SPEC family.

The protein localises to the cytoplasm. It localises to the cytoskeleton. It is found in the cell membrane. Probably involved in the organization of the actin cytoskeleton by acting downstream of CDC42, inducing actin filament assembly. The polypeptide is CDC42 small effector protein 1 (CDC42SE1) (Gallus gallus (Chicken)).